Reading from the N-terminus, the 239-residue chain is Probable transcriptional regulatory protein VC_A0006 (239 aa).

The protein belongs to the TACO1 family.

It localises to the cytoplasm. The sequence is that of Probable transcriptional regulatory protein VC_A0006 from Vibrio cholerae serotype O1 (strain ATCC 39315 / El Tor Inaba N16961).